A 377-amino-acid polypeptide reads, in one-letter code: Bacterial actin-related protein (377 aa).

Belongs to the actin family.

In terms of biological role, may be a dominant-negative inhibitor of eukaryotic actin polymerization. The sequence is that of Bacterial actin-related protein (barP) from Haliangium ochraceum (strain DSM 14365 / JCM 11303 / SMP-2).